A 178-amino-acid polypeptide reads, in one-letter code: ATP synthase subunit delta (178 aa).

Belongs to the ATPase delta chain family. F-type ATPases have 2 components, F(1) - the catalytic core - and F(0) - the membrane proton channel. F(1) has five subunits: alpha(3), beta(3), gamma(1), delta(1), epsilon(1). F(0) has three main subunits: a(1), b(2) and c(10-14). The alpha and beta chains form an alternating ring which encloses part of the gamma chain. F(1) is attached to F(0) by a central stalk formed by the gamma and epsilon chains, while a peripheral stalk is formed by the delta and b chains.

It is found in the cell membrane. F(1)F(0) ATP synthase produces ATP from ADP in the presence of a proton or sodium gradient. F-type ATPases consist of two structural domains, F(1) containing the extramembraneous catalytic core and F(0) containing the membrane proton channel, linked together by a central stalk and a peripheral stalk. During catalysis, ATP synthesis in the catalytic domain of F(1) is coupled via a rotary mechanism of the central stalk subunits to proton translocation. Functionally, this protein is part of the stalk that links CF(0) to CF(1). It either transmits conformational changes from CF(0) to CF(1) or is implicated in proton conduction. The sequence is that of ATP synthase subunit delta from Desulfitobacterium hafniense (strain DSM 10664 / DCB-2).